The chain runs to 249 residues: MSQANKIYFEDRSIVTPGDLIAEGEFQVPWSPYYYKVNGKYYSAITGLITVKDGSIFEVIPLESSRYYPKVGDTIIGLVEDIEIYGWVIDIKSFYSAYLPASSLLGRPISPGEDVRRYLDVGDYVIAKIEAFDRTISPVLTVKGKGLGRIPLGTVMDIMPVKVPRVIGKNRSMIEVLTSESGCEIFVAQNGRIHIKCANNLIEEALIEAINIIQSESHTKGLTERIRNFLKQKLGVIRNDSAPKTEANT.

The region spanning 72–143 (GDTIIGLVED…RTISPVLTVK (72 aa)) is the S1 motif domain. The KH domain maps to 151 to 213 (PLGTVMDIMP…EALIEAINII (63 aa)).

This sequence belongs to the RRP4 family. In terms of assembly, component of the archaeal exosome complex. Forms a trimer of Rrp4 and/or Csl4 subunits. The trimer associates with a hexameric ring-like arrangement composed of 3 Rrp41-Rrp42 heterodimers.

Its subcellular location is the cytoplasm. In terms of biological role, non-catalytic component of the exosome, which is a complex involved in RNA degradation. Increases the RNA binding and the efficiency of RNA degradation. Confers strong poly(A) specificity to the exosome. In Sulfolobus acidocaldarius (strain ATCC 33909 / DSM 639 / JCM 8929 / NBRC 15157 / NCIMB 11770), this protein is Exosome complex component Rrp4.